The following is a 606-amino-acid chain: Glutamine--fructose-6-phosphate aminotransferase [isomerizing] (606 aa).

The active-site Nucleophile; for GATase activity is Cys2. In terms of domain architecture, Glutamine amidotransferase type-2 spans 2–218 (CGIFGYLGEK…SGELAVLRIG (217 aa)). 2 SIS domains span residues 278 to 424 (FTES…HRQV) and 448 to 596 (LDSS…VDRP). Residue Lys601 is the For Fru-6P isomerization activity of the active site.

As to quaternary structure, homodimer.

It is found in the cytoplasm. It carries out the reaction D-fructose 6-phosphate + L-glutamine = D-glucosamine 6-phosphate + L-glutamate. Functionally, catalyzes the first step in hexosamine metabolism, converting fructose-6P into glucosamine-6P using glutamine as a nitrogen source. This Chlamydia trachomatis serovar D (strain ATCC VR-885 / DSM 19411 / UW-3/Cx) protein is Glutamine--fructose-6-phosphate aminotransferase [isomerizing].